The chain runs to 345 residues: Homeobox-leucine zipper protein HOX16 (345 aa).

The homeobox DNA-binding region spans 76–135 (LPEKKRRLTPEQVHLLERSFEEENKLEPERKTELARKLGLQPRQVAVWFQNRRARWKTKQ). A leucine-zipper region spans residues 134 to 178 (KQLERDFDRLKASFDALRADHDALLQDNHRLHSQVMSLTEKLQEK). A disordered region spans residues 220 to 241 (FEEQQEQQVKAEDRLSTGSGGS).

The protein belongs to the HD-ZIP homeobox family. Class I subfamily. In terms of tissue distribution, expressed in seedlings, stems, leaf sheaths and blades and panicles.

It is found in the nucleus. In terms of biological role, probable transcription factor. This Oryza sativa subsp. indica (Rice) protein is Homeobox-leucine zipper protein HOX16 (HOX16).